The chain runs to 102 residues: Large ribosomal subunit protein uL24 (102 aa).

The protein belongs to the universal ribosomal protein uL24 family. As to quaternary structure, part of the 50S ribosomal subunit.

Functionally, one of two assembly initiator proteins, it binds directly to the 5'-end of the 23S rRNA, where it nucleates assembly of the 50S subunit. One of the proteins that surrounds the polypeptide exit tunnel on the outside of the subunit. The protein is Large ribosomal subunit protein uL24 of Rhizobium rhizogenes (strain K84 / ATCC BAA-868) (Agrobacterium radiobacter).